The following is a 93-amino-acid chain: Cell division topological specificity factor (93 aa).

It belongs to the MinE family.

Prevents the cell division inhibition by proteins MinC and MinD at internal division sites while permitting inhibition at polar sites. This ensures cell division at the proper site by restricting the formation of a division septum at the midpoint of the long axis of the cell. In Synechococcus sp. (strain WH7803), this protein is Cell division topological specificity factor.